Consider the following 574-residue polypeptide: Isocitrate dehydrogenase kinase/phosphatase (574 aa).

ATP contacts are provided by residues 315–321 (APGIRGM) and lysine 336. Aspartate 371 is a catalytic residue.

This sequence belongs to the AceK family.

Its subcellular location is the cytoplasm. The enzyme catalyses L-seryl-[isocitrate dehydrogenase] + ATP = O-phospho-L-seryl-[isocitrate dehydrogenase] + ADP + H(+). In terms of biological role, bifunctional enzyme which can phosphorylate or dephosphorylate isocitrate dehydrogenase (IDH) on a specific serine residue. This is a regulatory mechanism which enables bacteria to bypass the Krebs cycle via the glyoxylate shunt in response to the source of carbon. When bacteria are grown on glucose, IDH is fully active and unphosphorylated, but when grown on acetate or ethanol, the activity of IDH declines drastically concomitant with its phosphorylation. The polypeptide is Isocitrate dehydrogenase kinase/phosphatase (Escherichia coli (strain SMS-3-5 / SECEC)).